Reading from the N-terminus, the 309-residue chain is RHOMBOID-like protein 5 (309 aa).

Transmembrane regions (helical) follow at residues 27-47, 113-133, 140-160, 170-190, 200-220, 222-242, and 274-294; these read IPVPWVAWLVPLILAANFVTF, IWLHGGFLHLMANMISLMCIG, FGFMRIGALYVISGLGGSLVS, VSVGASGALFGLLGAMLSELI, CTALMTLILIIVLNLSVGFLP, VDNSAHFGGFLAGFFLGFVLL, and IFRFTSLAILLAGFIAGYTKL. The active-site Nucleophile is Ser175. The active-site Charge relay system is the His227.

Belongs to the peptidase S54 family.

The protein resides in the membrane. The enzyme catalyses Cleaves type-1 transmembrane domains using a catalytic dyad composed of serine and histidine that are contributed by different transmembrane domains.. Functionally, probable rhomboid-type serine protease that catalyzes intramembrane proteolysis. May function in reproductive organs maturation. This chain is RHOMBOID-like protein 5, found in Arabidopsis thaliana (Mouse-ear cress).